The chain runs to 257 residues: Protein YIPF5 (257 aa).

Residues 1 to 124 (MSGFENLNTD…KVADGSIMNE (124 aa)) are Cytoplasmic-facing. Residues 75-106 (PASPQPFYGNSFEDEPPLLEELGINFDHIWQK) are interaction with Sec23. The chain crosses the membrane as a helical span at residues 125-145 (TDLAGPMVFCLAFGATLLLAG). Residue K146 is a topological domain, lumenal. Residues 147–167 (IQFGYVYGISAIGCLGMFCLL) traverse the membrane as a helical segment. The Cytoplasmic portion of the chain corresponds to 168-173 (NLMSMT). A helical transmembrane segment spans residues 174 to 194 (GVSFGCVASVLGYCLLPMILL). The Lumenal portion of the chain corresponds to 195–196 (SS). Residues 197–217 (FAVIFSLQGMVGIILTAGIIG) traverse the membrane as a helical segment. The Cytoplasmic portion of the chain corresponds to 218–236 (WCSFSASKIFISALAMEGQ). Residues 237–257 (QLLVAYPCALLYGVFALISVF) form a helical membrane-spanning segment.

It belongs to the YIP1 family. As to quaternary structure, interacts with the COPII coat components Sec23 (SEC23A and/or SEC23B) and Sec24 (SEC24A and/or SEC24B). Interacts with YIF1A. May interact with RAB1A. Interacts with YIPF3 and YIPF4.

The protein localises to the endoplasmic reticulum membrane. The protein resides in the golgi apparatus. It localises to the cis-Golgi network membrane. It is found in the cytoplasmic vesicle. Its subcellular location is the COPII-coated vesicle. Functionally, plays a role in transport between endoplasmic reticulum and Golgi. In pancreatic beta cells, required to transport proinsulin from endoplasmic reticulum into the Golgi. This Macaca fascicularis (Crab-eating macaque) protein is Protein YIPF5 (YIPF5).